The following is a 201-amino-acid chain: Molybdenum cofactor guanylyltransferase (201 aa).

GTP is bound by residues 14–16 (LAG), Lys31, and Asp104. Residue Asp104 participates in Mg(2+) binding.

It belongs to the MobA family. As to quaternary structure, monomer. It depends on Mg(2+) as a cofactor.

The protein resides in the cytoplasm. It carries out the reaction Mo-molybdopterin + GTP + H(+) = Mo-molybdopterin guanine dinucleotide + diphosphate. Functionally, transfers a GMP moiety from GTP to Mo-molybdopterin (Mo-MPT) cofactor (Moco or molybdenum cofactor) to form Mo-molybdopterin guanine dinucleotide (Mo-MGD) cofactor. This Helicobacter pylori (strain P12) protein is Molybdenum cofactor guanylyltransferase.